The primary structure comprises 705 residues: Complement C1r subcomponent (705 aa).

A signal peptide spans 1 to 17 (MWLLYLLVPALFCRAGG). The CUB 1 domain occupies 18-141 (SIPIPQKLFG…KGFLAYYQAV (124 aa)). Ca(2+)-binding residues include Glu66, Asp74, and Asp119. Cys71 and Cys89 form a disulfide bridge. N-linked (GlcNAc...) asparagine glycosylation occurs at Asn125. Residues Asp142, Leu143, and Glu145 each contribute to the Ca(2+) site. Residues 142 to 190 (DLDECASRSKSGEEDPQPQCQHLCHNYVGGYFCSCRPGYELQEDTHSCQ) form the EGF-like; calcium-binding domain. 4 disulfides stabilise this stretch: Cys146/Cys165, Cys161/Cys174, Cys176/Cys189, and Cys193/Cys220. Ca(2+) contacts are provided by Asn167, Tyr168, and Gly171. Position 167 is a (3R)-3-hydroxyasparagine (Asn167). The CUB 2 domain occupies 193–305 (CSSELYTEAS…RGWKLRYTTE (113 aa)). Ser206 is modified (phosphoserine; by CK2). The N-linked (GlcNAc...) asparagine glycan is linked to Asn221. Ca(2+) contacts are provided by Asp243, Asp253, Asp290, and Asp294. Cys250 and Cys268 are disulfide-bonded. Sushi domains follow at residues 307–373 (IKCP…RCKI) and 374–449 (KDCG…RCLP). Disulfide bonds link Cys309–Cys358, Cys338–Cys371, Cys376–Cys429, Cys406–Cys447, and Cys451–Cys577. The 239-residue stretch at 464–702 (IIGGQKAKMG…YVDWIKKEME (239 aa)) folds into the Peptidase S1 domain. The active-site Charge relay system is the His502. An N-linked (GlcNAc...) asparagine glycan is attached at Asn514. Asp557 serves as the catalytic Charge relay system. Asn581 is a glycosylation site (N-linked (GlcNAc...) asparagine). 2 disulfides stabilise this stretch: Cys620-Cys639 and Cys650-Cys680. Ser654 functions as the Charge relay system in the catalytic mechanism.

It belongs to the peptidase S1 family. Core component of the complement C1 complex, a calcium-dependent complex composed of 1 molecule of the C1Q subcomplex, 2 molecules of C1R and 2 molecules of C1S. The C1Q subcomplex is composed 18 subunits: 3 chains of C1QA, C1QB, and C1QC trimerize to form 6 collagen-like triple helices connected to six globular ligand-recognition modules. Within the C1 complex, C1R is a dimer of identical chains, each of which is activated by cleavage into two chains, heavy and light, connected by disulfide bonds. Cleaved and activated by autocatalytic processing to generate Complement C1r subcomponent heavy and light chains that are connected by disulfide bonds. Post-translationally, the iron and 2-oxoglutarate dependent 3-hydroxylation of aspartate and asparagine is (R) stereospecific within EGF domains.

The protein localises to the secreted. It localises to the cell surface. The catalysed reaction is Selective cleavage of Lys(or Arg)-|-Ile bond in complement subcomponent C1s to form the active form of C1s (EC 3.4.21.42).. Activated by the C1Q subcomplex of the C1 complex following C1Q binding to immunoglobulins (IgG or IgM) complexed with antigens to form antigen-antibody complexes on the surface of pathogens. Immunoglobulin-binding promotes autoactivation of C1R, which results in the cleavage of the Arg-Ile bond in the catalytic domain. Serine protease component of the complement C1 complex, a multiprotein complex that initiates the classical pathway of the complement system, a cascade of proteins that leads to phagocytosis and breakdown of pathogens and signaling that strengthens the adaptive immune system. C1R catalyzes the first enzymatic step in the classical complement pathway: it is activated by the C1Q subcomplex of the C1 complex, which associates with IgG or IgM immunoglobulins complexed with antigens to form antigen-antibody complexes on the surface of pathogens. Immunoglobulin-binding promotes the autocatalytic cleavage and activation of C1R. Activated C1R then cleaves and activates C1S, the second protease of the classical complement pathway. It is unclear if C1R activates C1S within single, strained C1 complexes or between neighboring C1 complexes on surfaces. This chain is Complement C1r subcomponent, found in Homo sapiens (Human).